The following is a 353-amino-acid chain: UPF0283 membrane protein YcjF (353 aa).

The span at 1–19 shows a compositional bias: basic and acidic residues; sequence MSEPLKPRIDFAEPLKEEP. The segment at 1–35 is disordered; the sequence is MSEPLKPRIDFAEPLKEEPTSAFKAQQTFSEAESR. A run of 3 helical transmembrane segments spans residues 70–90, 100–120, and 213–233; these read MVMG…VQWT, VALG…GSVV, and ESTL…FIAW.

It belongs to the UPF0283 family.

Its subcellular location is the cell inner membrane. This chain is UPF0283 membrane protein YcjF, found in Salmonella dublin (strain CT_02021853).